Reading from the N-terminus, the 394-residue chain is MAKEKFERSKPHVNVGTIGHVDHGKTTLTAALTTILAKKFGGAAKAYDQIDNAPEEKARGITINTSHVEYETETRHYAHVDCPGHADYVKNMITGAAQMDGAILVCSAADGPMPQTREHILLARQVGVPYIIVFMNKCDMVDDAELLELVEMEIRDLLSSYDFPGDDCPIVQGSALKALEGDAAYEEKIFELATALDSYIPTPERAVDKPFLLPIEDVFSISGRGTVVTGRVERGIIHVGDEIEIVGLKETQKTTCTGVEMFRKLLDEGQAGDNVGVLLRGTKREDVERGQVLAKPGTITPHTKFKAEVYVLSKEEGGRHTPFFANYRPQFYFRTTDVTGAVTLEKGVEMVMPGENVTITVELIAPIAMEEGLRFAIREGGRTVGAGVVSSVIA.

The region spanning 10–204 is the tr-type G domain; the sequence is KPHVNVGTIG…ALDSYIPTPE (195 aa). The G1 stretch occupies residues 19 to 26; it reads GHVDHGKT. Position 19-26 (19-26) interacts with GTP; the sequence is GHVDHGKT. A Mg(2+)-binding site is contributed by T26. The interval 60-64 is G2; it reads GITIN. The segment at 81-84 is G3; sequence DCPG. Residues 81–85 and 136–139 contribute to the GTP site; these read DCPGH and NKCD. Positions 136 to 139 are G4; that stretch reads NKCD. The segment at 174–176 is G5; it reads SAL.

This sequence belongs to the TRAFAC class translation factor GTPase superfamily. Classic translation factor GTPase family. EF-Tu/EF-1A subfamily. As to quaternary structure, monomer.

It localises to the cytoplasm. It carries out the reaction GTP + H2O = GDP + phosphate + H(+). GTP hydrolase that promotes the GTP-dependent binding of aminoacyl-tRNA to the A-site of ribosomes during protein biosynthesis. This Neisseria gonorrhoeae (strain ATCC 700825 / FA 1090) protein is Elongation factor Tu.